Reading from the N-terminus, the 113-residue chain is Putative anti-sigma factor antagonist TM1081 homolog (113 aa).

An STAS domain is found at 1–110; it reads MFPYKIVEDV…DTISEALEEV (110 aa). Residue serine 55 is modified to Phosphoserine.

Belongs to the anti-sigma-factor antagonist family. Phosphorylated on a serine residue.

Functionally, in the phosphorylated form it could act as an anti-anti-sigma factor that counteracts an anti-sigma factor and thus releases a sigma factor from inhibition. The protein is Putative anti-sigma factor antagonist TM1081 homolog of Thermotoga neapolitana.